The following is a 270-amino-acid chain: tRNA pseudouridine synthase A (270 aa).

D60 acts as the Nucleophile in catalysis. The tract at residues 107 to 111 (FHARF) is RNA binding. Y118 provides a ligand contact to substrate. Positions 168–172 (QCQSR) are interaction with tRNA.

This sequence belongs to the tRNA pseudouridine synthase TruA family. In terms of assembly, homodimer.

The enzyme catalyses uridine(38/39/40) in tRNA = pseudouridine(38/39/40) in tRNA. In terms of biological role, formation of pseudouridine at positions 38, 39 and 40 in the anticodon stem and loop of transfer RNAs. This chain is tRNA pseudouridine synthase A, found in Klebsiella pneumoniae (strain 342).